We begin with the raw amino-acid sequence, 132 residues long: ATP synthase epsilon chain (132 aa).

This sequence belongs to the ATPase epsilon chain family. In terms of assembly, F-type ATPases have 2 components, CF(1) - the catalytic core - and CF(0) - the membrane proton channel. CF(1) has five subunits: alpha(3), beta(3), gamma(1), delta(1), epsilon(1). CF(0) has three main subunits: a, b and c.

It is found in the cell membrane. Its function is as follows. Produces ATP from ADP in the presence of a proton gradient across the membrane. The protein is ATP synthase epsilon chain (atpC) of Bacillus sp. (strain PS3).